The sequence spans 246 residues: uncharacterized protein (246 aa).

10-34 (VITGASSGIGEETVNLLSENGAKLV) lines the NADP(+) pocket. S140 is a substrate binding site. Residue Y153 is the Proton acceptor of the active site.

The protein belongs to the short-chain dehydrogenases/reductases (SDR) family.

This is an uncharacterized protein from Staphylococcus saprophyticus subsp. saprophyticus (strain ATCC 15305 / DSM 20229 / NCIMB 8711 / NCTC 7292 / S-41).